A 92-amino-acid polypeptide reads, in one-letter code: Small ribosomal subunit protein uS19c (92 aa).

Belongs to the universal ribosomal protein uS19 family.

The protein localises to the plastid. In terms of biological role, protein S19 forms a complex with S13 that binds strongly to the 16S ribosomal RNA. The protein is Small ribosomal subunit protein uS19c of Cuscuta exaltata (Tall dodder).